The primary structure comprises 565 residues: Heme/hemopexin transporter protein HuxB (565 aa).

Residues 1 to 26 form the signal peptide; that stretch reads MKMRPRYSVIASAVSLGFVLSKSVMA. Positions 73-150 constitute a POTRA domain; it reads FPLTQVQILD…GTVKILLLKG (78 aa).

This sequence belongs to the TPS (TC 1.B.20) family.

The protein localises to the cell outer membrane. Likely functions in the release of soluble HxuA from the cell. In terms of biological role, probable member of a two partner secretion pathway (TPS) in which it mediates the secretion of HuxA. The sequence is that of Heme/hemopexin transporter protein HuxB (hxuB) from Haemophilus influenzae.